A 208-amino-acid polypeptide reads, in one-letter code: Outer-membrane lipoprotein carrier protein (208 aa).

An N-terminal signal peptide occupies residues 1-22 (MKKRLCAVLLASPLLFSAAVFA).

Belongs to the LolA family. In terms of assembly, monomer.

The protein resides in the periplasm. In terms of biological role, participates in the translocation of lipoproteins from the inner membrane to the outer membrane. Only forms a complex with a lipoprotein if the residue after the N-terminal Cys is not an aspartate (The Asp acts as a targeting signal to indicate that the lipoprotein should stay in the inner membrane). The chain is Outer-membrane lipoprotein carrier protein from Shewanella baltica (strain OS223).